The sequence spans 328 residues: Phosphate acyltransferase (328 aa).

Belongs to the PlsX family. As to quaternary structure, homodimer. Probably interacts with PlsY.

It localises to the cytoplasm. It catalyses the reaction a fatty acyl-[ACP] + phosphate = an acyl phosphate + holo-[ACP]. The protein operates within lipid metabolism; phospholipid metabolism. Catalyzes the reversible formation of acyl-phosphate (acyl-PO(4)) from acyl-[acyl-carrier-protein] (acyl-ACP). This enzyme utilizes acyl-ACP as fatty acyl donor, but not acyl-CoA. The chain is Phosphate acyltransferase from Campylobacter jejuni subsp. jejuni serotype O:23/36 (strain 81-176).